The following is a 180-amino-acid chain: NADH-quinone oxidoreductase subunit I (180 aa).

2 consecutive 4Fe-4S ferredoxin-type domains span residues 48 to 80 and 90 to 119; these read IVLT…LQKS and EFFR…LTPD. [4Fe-4S] cluster-binding residues include cysteine 60, cysteine 63, cysteine 66, cysteine 70, cysteine 99, cysteine 102, cysteine 105, and cysteine 109. Residues 161 to 174 show a composition bias toward basic and acidic residues; that stretch reads KPKGDAENEAKPID. The disordered stretch occupies residues 161–180; the sequence is KPKGDAENEAKPIDVKSLLP.

It belongs to the complex I 23 kDa subunit family. As to quaternary structure, NDH-1 is composed of 14 different subunits. Subunits NuoA, H, J, K, L, M, N constitute the membrane sector of the complex. Requires [4Fe-4S] cluster as cofactor.

Its subcellular location is the cell inner membrane. It carries out the reaction a quinone + NADH + 5 H(+)(in) = a quinol + NAD(+) + 4 H(+)(out). Its function is as follows. NDH-1 shuttles electrons from NADH, via FMN and iron-sulfur (Fe-S) centers, to quinones in the respiratory chain. The immediate electron acceptor for the enzyme in this species is believed to be ubiquinone. Couples the redox reaction to proton translocation (for every two electrons transferred, four hydrogen ions are translocated across the cytoplasmic membrane), and thus conserves the redox energy in a proton gradient. This chain is NADH-quinone oxidoreductase subunit I, found in Aeromonas hydrophila subsp. hydrophila (strain ATCC 7966 / DSM 30187 / BCRC 13018 / CCUG 14551 / JCM 1027 / KCTC 2358 / NCIMB 9240 / NCTC 8049).